A 291-amino-acid polypeptide reads, in one-letter code: D-alanyl-D-alanine carboxypeptidase DacB2 (291 aa).

Residues 1-22 (MRKLMTATAALCACAVTVSAGA) form the signal peptide. The active-site Acyl-ester intermediate is the S69. Residue K72 is the Proton acceptor of the active site. The active site involves S124.

The protein belongs to the peptidase S11 family.

The protein resides in the periplasm. It participates in cell wall biogenesis; peptidoglycan biosynthesis. Its activity is regulated as follows. Inhibited by the beta-lactam antibiotic meropenem. Inhibited by the non-specific inhibitor phenylmethylsulfonyl fluoride (PMSF). Its function is as follows. Probably cleaves the terminal D-Ala-D-Ala dipeptide of the peptidoglycan stem peptide. Shows significant D,D-carboxypeptidase activity in vitro. Acts on the synthetic penta-peptide substrate Penta-DAP (L-Ala-gamma-D-Gln-DAP-D-Ala-D-Ala). Also shows weak activity on Penta-Lys (L-Ala-gamma-Glu-L-Lys-D-Ala-D-Ala). The catalytic domain binds weakly to peptidoglycan in vitro. Plays an important role in the maintenance of colony morphology and cell wall permeability and integrity. This is D-alanyl-D-alanine carboxypeptidase DacB2 from Mycobacterium tuberculosis (strain ATCC 25618 / H37Rv).